The primary structure comprises 197 residues: Pyridoxal 5'-phosphate synthase subunit PdxT (197 aa).

52–54 (GES) contacts L-glutamine. C83 serves as the catalytic Nucleophile. Residues R115 and 142-143 (IR) contribute to the L-glutamine site. Catalysis depends on charge relay system residues H178 and E180.

This sequence belongs to the glutaminase PdxT/SNO family. In the presence of PdxS, forms a dodecamer of heterodimers. Only shows activity in the heterodimer.

The catalysed reaction is aldehydo-D-ribose 5-phosphate + D-glyceraldehyde 3-phosphate + L-glutamine = pyridoxal 5'-phosphate + L-glutamate + phosphate + 3 H2O + H(+). It carries out the reaction L-glutamine + H2O = L-glutamate + NH4(+). The protein operates within cofactor biosynthesis; pyridoxal 5'-phosphate biosynthesis. Catalyzes the hydrolysis of glutamine to glutamate and ammonia as part of the biosynthesis of pyridoxal 5'-phosphate. The resulting ammonia molecule is channeled to the active site of PdxS. The sequence is that of Pyridoxal 5'-phosphate synthase subunit PdxT from Korarchaeum cryptofilum (strain OPF8).